Reading from the N-terminus, the 178-residue chain is Large ribosomal subunit protein bL25 (178 aa).

This sequence belongs to the bacterial ribosomal protein bL25 family. CTC subfamily. In terms of assembly, part of the 50S ribosomal subunit; part of the 5S rRNA/L5/L18/L25 subcomplex. Contacts the 5S rRNA. Binds to the 5S rRNA independently of L5 and L18.

This is one of the proteins that binds to the 5S RNA in the ribosome where it forms part of the central protuberance. The sequence is that of Large ribosomal subunit protein bL25 from Campylobacter lari (strain RM2100 / D67 / ATCC BAA-1060).